Consider the following 511-residue polypeptide: Membrane-bound lytic murein transglycosylase F (511 aa).

Positions 1-19 are cleaved as a signal peptide; it reads MKKLKINYLLIGIVTLLLA. The interval 20–269 is non-LT domain; that stretch reads AALWPSIPWS…RLEEKYLGHG (250 aa). The LT domain stretch occupies residues 270 to 511; the sequence is NDFDYVDTRT…ARMKLPGHLY (242 aa). Glutamate 314 is an active-site residue.

The protein in the N-terminal section; belongs to the bacterial solute-binding protein 3 family. In the C-terminal section; belongs to the transglycosylase Slt family.

The protein localises to the cell outer membrane. The catalysed reaction is Exolytic cleavage of the (1-&gt;4)-beta-glycosidic linkage between N-acetylmuramic acid (MurNAc) and N-acetylglucosamine (GlcNAc) residues in peptidoglycan, from either the reducing or the non-reducing ends of the peptidoglycan chains, with concomitant formation of a 1,6-anhydrobond in the MurNAc residue.. Its function is as follows. Murein-degrading enzyme that degrades murein glycan strands and insoluble, high-molecular weight murein sacculi, with the concomitant formation of a 1,6-anhydromuramoyl product. Lytic transglycosylases (LTs) play an integral role in the metabolism of the peptidoglycan (PG) sacculus. Their lytic action creates space within the PG sacculus to allow for its expansion as well as for the insertion of various structures such as secretion systems and flagella. The chain is Membrane-bound lytic murein transglycosylase F from Klebsiella pneumoniae subsp. pneumoniae (strain ATCC 700721 / MGH 78578).